A 282-amino-acid polypeptide reads, in one-letter code: Parvulin-like PPIase (282 aa).

A signal peptide spans 1–20; sequence MKKLSVIFLSVSMLSGIAFA. Residues 138–231 enclose the PpiC domain; sequence KEQIKVAHIL…FGWHIIKVLE (94 aa).

This sequence belongs to the PpiC/parvulin rotamase family.

Its subcellular location is the cell outer membrane. The enzyme catalyses [protein]-peptidylproline (omega=180) = [protein]-peptidylproline (omega=0). This Rickettsia felis (strain ATCC VR-1525 / URRWXCal2) (Rickettsia azadi) protein is Parvulin-like PPIase (plp).